Here is a 708-residue protein sequence, read N- to C-terminus: ATP-dependent DNA helicase Hel308 (708 aa).

ATP is bound by residues Gln-28 and 46 to 53 (TATASGKS). In terms of domain architecture, Helicase ATP-binding spans 33–198 (RAGIFDGRSV…WLGARLVESS (166 aa)). A DEAH box motif is present at residues 143–146 (DEIH). Residues 231-429 (EVALAVDAVA…EPNLRAHVLG (199 aa)) form the Helicase C-terminal domain.

Belongs to the helicase family. Hel308 subfamily. As to quaternary structure, monomer.

The enzyme catalyses Couples ATP hydrolysis with the unwinding of duplex DNA by translocating in the 3'-5' direction.. The catalysed reaction is ATP + H2O = ADP + phosphate + H(+). In terms of biological role, DNA-dependent ATPase and 3'-5' DNA helicase that may be involved in repair of stalled replication forks. This is ATP-dependent DNA helicase Hel308 from Pyrobaculum calidifontis (strain DSM 21063 / JCM 11548 / VA1).